A 324-amino-acid chain; its full sequence is MEVDEDIELQKHQEQQSRKLQRFSEDNTGLMRNWNNPSSRIIRVSRASGGKDRHSKVLTSKGLRDRRIRLSVATAIQFYDLQDRLGFDQPSKAVEWLINAASDSITDLPLLNTNFDHLDQNQNQTKSACSSGTSESSLLSLSRTEIRGKARERARERTAKDRDKDLQNAHSSFTQLLTGGFDQQPSNRNWTGGSDCFNPVQLQIPNSSSQEPMNHPFSFVPDYNFGISSSSSAINGGYSSRGTLQSNSQSLFLNNNNNITQRSSISSSSSSSSPMDSQSISFFMATPPPLDHHNHQLPETFDGRLYLYYGEGNRSSDDKAKERR.

Residues 50–108 (GKDRHSKVLTSKGLRDRRIRLSVATAIQFYDLQDRLGFDQPSKAVEWLINAASDSITDL) form the TCP domain. Disordered stretches follow at residues 122-215 (QNQT…PMNH) and 261-297 (QRSSISSSSSSSSPMDSQSISFFMATPPPLDHHNHQL). Residues 127–142 (SACSSGTSESSLLSLS) show a composition bias toward low complexity. A R domain is found at 144–162 (TEIRGKARERARERTAKDR). The span at 144–167 (TEIRGKARERARERTAKDRDKDLQ) shows a compositional bias: basic and acidic residues. Polar residues-rich tracts occupy residues 168 to 192 (NAHSSFTQLLTGGFDQQPSNRNWTG) and 200 to 212 (VQLQIPNSSSQEP). Residues 261–281 (QRSSISSSSSSSSPMDSQSIS) show a composition bias toward low complexity.

Forms a heterodimeric complex with ABAP1. Interacts with SPL. As to expression, expressed in cotyledons, particularly in the vascular region, in leaves, roots, stems, buds, flowers and siliques.

Its subcellular location is the nucleus. Functionally, plays a pivotal role in the control of morphogenesis of shoot organs by negatively regulating the expression of boundary-specific genes such as CUC genes, probably through the induction of miRNA (e.g. miR164). In association with ABAP1, exerts a negative role in cell proliferation in leaves, possibly by inhibiting mitotic DNA replication. Participates in ovule development. The protein is Transcription factor TCP24 (TCP24) of Arabidopsis thaliana (Mouse-ear cress).